Consider the following 32-residue polypeptide: Dermaseptin-8 (32 aa).

Residue glutamine 32 is modified to Glutamine amide.

In terms of tissue distribution, expressed by the skin glands.

It is found in the secreted. Its function is as follows. Antimicrobial peptide, active against the Gram-positive bacterium S.aureus, and the Gram-negative bacteriun E.coli. Has hemolytic activity at 432 uM. This chain is Dermaseptin-8, found in Phyllomedusa tarsius (Brownbelly leaf frog).